The sequence spans 389 residues: Nucleic acid dioxygenase ALKBH1 (389 aa).

The interaction with DNAJB6 stretch occupies residues methionine 1–asparagine 127. A tRNA-binding region spans residues serine 86–serine 389. Residues tryptophan 144 and tyrosine 175–tyrosine 177 each bind substrate. The region spanning glutamine 213–leucine 347 is the Fe2OG dioxygenase domain. Asparagine 220–tyrosine 222 provides a ligand contact to 2-oxoglutarate. Histidine 231, aspartate 233, and histidine 287 together coordinate Fe cation. Residue aspartate 233 participates in substrate binding. Arginine 338–arginine 344 contacts 2-oxoglutarate.

As to quaternary structure, monomer. Interacts with DNAJB6. The cofactor is Fe(2+). In adult organs, highly expressed in testis, eye, brain and kidney.

The protein localises to the nucleus. The enzyme catalyses an N(6)-methyl-2'-deoxyadenosine in DNA + 2-oxoglutarate + O2 = a 2'-deoxyadenosine in DNA + formaldehyde + succinate + CO2. It carries out the reaction 2'-deoxyribonucleotide-(2'-deoxyribose 5'-phosphate)-2'-deoxyribonucleotide-DNA = a 3'-end 2'-deoxyribonucleotide-(2,3-dehydro-2,3-deoxyribose 5'-phosphate)-DNA + a 5'-end 5'-phospho-2'-deoxyribonucleoside-DNA + H(+). It catalyses the reaction a methylated nucleobase within DNA + 2-oxoglutarate + O2 = a nucleobase within DNA + formaldehyde + succinate + CO2. The catalysed reaction is an N(1)-methyladenosine in tRNA + 2-oxoglutarate + O2 = an adenosine in tRNA + formaldehyde + succinate + CO2. The enzyme catalyses 5-methylcytidine(34) in mitochondrial tRNA(Met) + 2 2-oxoglutarate + 2 O2 = 5-formylcytidine(34) in mitochondrial tRNA(Met) + 2 succinate + 2 CO2 + H2O. It carries out the reaction an N(3)-methylcytidine in mRNA + 2-oxoglutarate + O2 = a cytidine in mRNA + formaldehyde + succinate + CO2. It catalyses the reaction N(1)-methyladenosine(58) in tRNA + 2-oxoglutarate + O2 = adenosine(58) in tRNA + formaldehyde + succinate + CO2. Functionally, dioxygenase that acts on nucleic acids, such as DNA and tRNA. Requires molecular oxygen, alpha-ketoglutarate and iron. A number of activities have been described for this dioxygenase, but recent results suggest that it mainly acts on tRNAs and mediates their demethylation or oxidation depending on the context and subcellular compartment. Mainly acts as a tRNA demethylase by removing N(1)-methyladenine from various tRNAs, with a preference for N(1)-methyladenine at position 58 (m1A58) present on a stem loop structure of tRNAs. Acts as a regulator of translation initiation and elongation in response to glucose deprivation: regulates both translation initiation, by mediating demethylation of tRNA(Met), and translation elongation, N(1)-methyladenine-containing tRNAs being preferentially recruited to polysomes to promote translation elongation. In mitochondrion, specifically interacts with mt-tRNA(Met) and mediates oxidation of mt-tRNA(Met) methylated at cytosine(34) to form 5-formylcytosine (f(5)c) at this position. mt-tRNA(Met) containing the f(5)c modification at the wobble position enables recognition of the AUA codon in addition to the AUG codon, expanding codon recognition in mitochondrial translation. Specifically demethylates DNA methylated on the 6th position of adenine (N(6)-methyladenosine) DNA. N(6)-methyladenosine (m6A) DNA is present at some L1 elements in embryonic stem cells and probably promotes their silencing. Demethylates mRNAs containing N(3)-methylcytidine modification. Also able to repair alkylated single-stranded DNA by oxidative demethylation, but with low activity. Also has DNA lyase activity and introduces double-stranded breaks at abasic sites: cleaves both single-stranded DNA and double-stranded DNA at abasic sites, with the greatest activity towards double-stranded DNA with two abasic sites. DNA lyase activity does not require alpha-ketoglutarate and iron and leads to the formation of an irreversible covalent protein-DNA adduct with the 5' DNA product. DNA lyase activity is not required during base excision repair and class switch recombination of the immunoglobulin heavy chain during B lymphocyte activation. May play a role in placental trophoblast lineage differentiation. In Mus musculus (Mouse), this protein is Nucleic acid dioxygenase ALKBH1.